A 113-amino-acid polypeptide reads, in one-letter code: Nitrogenase vanadium-iron protein delta chain (113 aa).

Hexamer of two alpha, two beta, and two delta chains. Requires iron-sulfur cluster as cofactor. Vanadium cation serves as cofactor.

It catalyses the reaction N2 + 8 reduced [2Fe-2S]-[ferredoxin] + 16 ATP + 16 H2O = H2 + 8 oxidized [2Fe-2S]-[ferredoxin] + 2 NH4(+) + 16 ADP + 16 phosphate + 6 H(+). Functionally, the key enzymatic reactions in nitrogen fixation are catalyzed by the nitrogenase complex, which has 2 components: the iron protein (component 2) and a component 1 which is either a molybdenum-iron protein, a vanadium-iron, or an iron-iron protein. This chain is Nitrogenase vanadium-iron protein delta chain (vnfG), found in Azotobacter salinestris.